A 313-amino-acid chain; its full sequence is Acetaldehyde dehydrogenase (313 aa).

15–18 (SGNI) lines the NAD(+) pocket. Cysteine 133 acts as the Acyl-thioester intermediate in catalysis. Residues 164-172 (SAGPGTRAN) and asparagine 289 each bind NAD(+).

The protein belongs to the acetaldehyde dehydrogenase family.

The enzyme catalyses acetaldehyde + NAD(+) + CoA = acetyl-CoA + NADH + H(+). In Rhizobium rhizogenes (strain K84 / ATCC BAA-868) (Agrobacterium radiobacter), this protein is Acetaldehyde dehydrogenase.